A 447-amino-acid polypeptide reads, in one-letter code: MGLPLMMERSSNNNNVELSRVAVSDTHGEDSPYFAGWKAYDENPYDESHNPSGVIQMGLAENQVSFDLLETYLEKKNPEGSMWGSKGAPGFRENALFQDYHGLKTFRQAMASFMEQIRGGKARFDPDRIVLTAGATAANELLTFILADPNDALLVPTPYYPGFDRDLRWRTGVKIVPIHCDSSNHFQITPEALESAYQTARDANIRVRGVLITNPSNPLGATVQKKVLEDLLDFCVRKNIHLVSDEIYSGSVFHASEFTSVAEIVENIDDVSVKERVHIVYSLSKDLGLPGFRVGTIYSYNDNVVRTARRMSSFTLVSSQTQHMLASMLSDEEFTEKYIRINRERLRRRYDTIVEGLKKAGIECLKGNAGLFCWMNLGFLLEKKTKDGELQLWDVILKELNLNISPGSSCHCSEVGWFRVCFANMSENTLEIALKRIHEFMDRRRRF.

Positions 61 and 100 each coordinate substrate. K285 is subject to N6-(pyridoxal phosphate)lysine.

This sequence belongs to the class-I pyridoxal-phosphate-dependent aminotransferase family. As to quaternary structure, homodimer and heterodimer. In vivo, the relevance of heterodimerization with other ACS enzymes is however unsure. Interacts with XBAT32. Pyridoxal 5'-phosphate serves as cofactor. In terms of processing, ubiquitinated by XBAT32. Ubiquitination probably leads to its subsequent degradation, thus controlling ethylene production. Expressed in roots.

It carries out the reaction S-adenosyl-L-methionine = 1-aminocyclopropane-1-carboxylate + S-methyl-5'-thioadenosine + H(+). The protein operates within alkene biosynthesis; ethylene biosynthesis via S-adenosyl-L-methionine; ethylene from S-adenosyl-L-methionine: step 1/2. In terms of biological role, 1-aminocyclopropane-1-carboxylate synthase (ACS) enzymes catalyze the conversion of S-adenosyl-L-methionine (SAM) into 1-aminocyclopropane-1-carboxylate (ACC), a direct precursor of ethylene. This Arabidopsis thaliana (Mouse-ear cress) protein is 1-aminocyclopropane-1-carboxylate synthase 7 (ACS7).